Consider the following 110-residue polypeptide: Ribonuclease (110 aa).

Catalysis depends on Glu-73, which acts as the Proton acceptor. The active-site Proton donor is the His-102.

The protein belongs to the ribonuclease N1/T1 family.

It is found in the secreted. Hydrolyzes phosphodiester bonds in RNA, poly- and oligoribonucleotides resulting in 3'-nucleoside monophosphates via 2',3'-cyclophosphate intermediates. In Niallia circulans (Bacillus circulans), this protein is Ribonuclease.